A 137-amino-acid chain; its full sequence is Cell division protein SepF (137 aa).

Belongs to the SepF family. Homodimer. Interacts with FtsZ.

The protein localises to the cytoplasm. Its function is as follows. Cell division protein that is part of the divisome complex and is recruited early to the Z-ring. Probably stimulates Z-ring formation, perhaps through the cross-linking of FtsZ protofilaments. Its function overlaps with FtsA. The polypeptide is Cell division protein SepF (Thermoanaerobacter pseudethanolicus (strain ATCC 33223 / 39E) (Clostridium thermohydrosulfuricum)).